Here is a 308-residue protein sequence, read N- to C-terminus: GTPase Era (308 aa).

One can recognise an Era-type G domain in the interval 14 to 181 (RCGFVALIGA…RRALAAAMPE (168 aa)). The G1 stretch occupies residues 22–29 (GAPNVGKS). GTP is bound at residue 22-29 (GAPNVGKS). The segment at 48–52 (QTTRA) is G2. Residues 69–72 (DTPG) are G3. Residues 69–73 (DTPGI) and 131–134 (NKID) contribute to the GTP site. Residues 131–134 (NKID) form a G4 region. Residues 160 to 162 (VAA) are G5. One can recognise a KH type-2 domain in the interval 212 to 289 (LHQELPYQST…HLFLFVKVRD (78 aa)).

It belongs to the TRAFAC class TrmE-Era-EngA-EngB-Septin-like GTPase superfamily. Era GTPase family. Monomer.

It localises to the cytoplasm. It is found in the cell inner membrane. In terms of biological role, an essential GTPase that binds both GDP and GTP, with rapid nucleotide exchange. Plays a role in 16S rRNA processing and 30S ribosomal subunit biogenesis and possibly also in cell cycle regulation and energy metabolism. The polypeptide is GTPase Era (Afipia carboxidovorans (strain ATCC 49405 / DSM 1227 / KCTC 32145 / OM5) (Oligotropha carboxidovorans)).